The following is a 188-amino-acid chain: ADP-ribosylation factor J (188 aa).

Residues 34–40 (DGAGKST), 75–79 (DVGGQ), and 134–137 (NKQD) contribute to the GTP site.

Belongs to the small GTPase superfamily. Arf family.

It is found in the golgi apparatus. GTP-binding protein that may be involved in protein trafficking. May modulate vesicle budding and uncoating within the Golgi apparatus. This Dictyostelium discoideum (Social amoeba) protein is ADP-ribosylation factor J (arrJ).